The chain runs to 237 residues: Insulin-like growth factor-binding protein 6 (237 aa).

Positions 1 to 25 (MTPHRLLPPLLLTLLLAARPGGALA) are cleaved as a signal peptide. In terms of domain architecture, IGFBP N-terminal spans 26–105 (RCPGCGQGVS…LQGRGRCGRA (80 aa)). 5 disulfides stabilise this stretch: Cys27-Cys30, Cys38-Cys42, Cys55-Cys61, Cys69-Cys82, and Cys76-Cys102. The disordered stretch occupies residues 101-158 (RCGRARTPSGENPKESKPQAGTARSQDVNRRDQQRNSGTSTTPSRSNSGGVQDTEMGP). A compositionally biased stretch (polar residues) spans 135–151 (RNSGTSTTPSRSNSGGV). Residues 156–231 (MGPCRKHLDS…SEGGDGSSLC (76 aa)) enclose the Thyroglobulin type-1 domain. 3 cysteine pairs are disulfide-bonded: Cys159-Cys186, Cys197-Cys208, and Cys210-Cys231. The segment at 215–237 (GQPLPGSSEGGDGSSLCPTGSSG) is disordered.

In terms of assembly, interacts (via C-terminal domain) with PHB2. Post-translationally, O-glycosylated.

It localises to the secreted. IGF-binding proteins prolong the half-life of the IGFs and have been shown to either inhibit or stimulate the growth promoting effects of the IGFs on cell culture. They alter the interaction of IGFs with their cell surface receptors. Activates the MAPK signaling pathway and induces cell migration. The sequence is that of Insulin-like growth factor-binding protein 6 (IGFBP6) from Bos taurus (Bovine).